The chain runs to 334 residues: Anthranilate phosphoribosyltransferase (334 aa).

5-phospho-alpha-D-ribose 1-diphosphate contacts are provided by residues Gly79, 82 to 83 (GD), Ser87, 89 to 92 (NIST), 107 to 115 (KAGNRSISS), and Ser119. Gly79 contributes to the anthranilate binding site. Ser91 provides a ligand contact to Mg(2+). Residue Asn110 coordinates anthranilate. Position 165 (Arg165) interacts with anthranilate. Mg(2+)-binding residues include Asp224 and Glu225.

The protein belongs to the anthranilate phosphoribosyltransferase family. As to quaternary structure, homodimer. Mg(2+) is required as a cofactor.

The catalysed reaction is N-(5-phospho-beta-D-ribosyl)anthranilate + diphosphate = 5-phospho-alpha-D-ribose 1-diphosphate + anthranilate. It functions in the pathway amino-acid biosynthesis; L-tryptophan biosynthesis; L-tryptophan from chorismate: step 2/5. Functionally, catalyzes the transfer of the phosphoribosyl group of 5-phosphorylribose-1-pyrophosphate (PRPP) to anthranilate to yield N-(5'-phosphoribosyl)-anthranilate (PRA). This is Anthranilate phosphoribosyltransferase from Streptococcus thermophilus (strain ATCC BAA-250 / LMG 18311).